The primary structure comprises 564 residues: Eukaryotic translation initiation factor 3 subunit L (564 aa).

N-acetylserine is present on Ser-2. A Phosphoserine modification is found at Ser-21. The PCI domain maps to 331–537; the sequence is DAIRVFANIL…IHIADTKVAR (207 aa). An N6-acetyllysine mark is found at Lys-465 and Lys-549.

The protein belongs to the eIF-3 subunit L family. Component of the eukaryotic translation initiation factor 3 (eIF-3) complex, which is composed of 13 subunits: EIF3A, EIF3B, EIF3C, EIF3D, EIF3E, EIF3F, EIF3G, EIF3H, EIF3I, EIF3J, EIF3K, EIF3L and EIF3M. The eIF-3 complex appears to include 3 stable modules: module A is composed of EIF3A, EIF3B, EIF3G and EIF3I; module B is composed of EIF3F, EIF3H, and EIF3M; and module C is composed of EIF3C, EIF3D, EIF3E, EIF3K and EIF3L. EIF3C of module C binds EIF3B of module A and EIF3H of module B, thereby linking the three modules. EIF3J is a labile subunit that binds to the eIF-3 complex via EIF3B. The eIF-3 complex interacts with RPS6KB1 under conditions of nutrient depletion. Mitogenic stimulation leads to binding and activation of a complex composed of MTOR and RPTOR, leading to phosphorylation and release of RPS6KB1 and binding of EIF4B to eIF-3. Interacts with RRN3.

Its subcellular location is the cytoplasm. In terms of biological role, component of the eukaryotic translation initiation factor 3 (eIF-3) complex, which is required for several steps in the initiation of protein synthesis. The eIF-3 complex associates with the 40S ribosome and facilitates the recruitment of eIF-1, eIF-1A, eIF-2:GTP:methionyl-tRNAi and eIF-5 to form the 43S pre-initiation complex (43S PIC). The eIF-3 complex stimulates mRNA recruitment to the 43S PIC and scanning of the mRNA for AUG recognition. The eIF-3 complex is also required for disassembly and recycling of post-termination ribosomal complexes and subsequently prevents premature joining of the 40S and 60S ribosomal subunits prior to initiation. The eIF-3 complex specifically targets and initiates translation of a subset of mRNAs involved in cell proliferation, including cell cycling, differentiation and apoptosis, and uses different modes of RNA stem-loop binding to exert either translational activation or repression. The sequence is that of Eukaryotic translation initiation factor 3 subunit L from Pan troglodytes (Chimpanzee).